The primary structure comprises 517 residues: Ammonium transporter 3 (517 aa).

Over 1-32 (MLNEPNALLRRDANSTIATVTELFPNEYSNAD) the chain is Extracellular. Residues 33–53 (IAYVLLSTVVVFTVTPGIALY) form a helical membrane-spanning segment. At 54-69 (YAGMVRKNSALSILTQ) the chain is on the cytoplasmic side. A helical membrane pass occupies residues 70–90 (SFLVTAVVFIQWYLFGYSLAC). Residues 91–118 (SSGSSFYGTLWQGGMNHLWLEPYIPGST) lie on the Extracellular side of the membrane. Residues 119 to 139 (IPAIVYFPFGGLFAVATAQLF) traverse the membrane as a helical segment. The Cytoplasmic segment spans residues 140–148 (AGAMAERGR). A helical membrane pass occupies residues 149 to 169 (LIPSLVISFLYITLVYCPQAY). The Extracellular segment spans residues 170–180 (WTWAPNGWLYT). A helical membrane pass occupies residues 181–201 (LGALDFAGGGPVHISSGFAAL). The Cytoplasmic segment spans residues 202–272 (AYSLCLGRRI…AHNPPHDAGM (71 aa)). The chain crosses the membrane as a helical span at residues 273 to 293 (VYIGVVLIWFAWLCFNSGTLL). Topologically, residues 294–299 (TVNIRT) are extracellular. Residues 300–320 (AYIMTNTLISSSFGALTWAII) traverse the membrane as a helical segment. Topologically, residues 321–327 (DYIRYRK) are cytoplasmic. The chain crosses the membrane as a helical span at residues 328 to 348 (FSTIGICEGAIAGLVGITPAC). Gly-349 is a topological domain (extracellular). Residues 350–370 (FVFPWGAAAGGIVPALVCNFL) form a helical membrane-spanning segment. At 371–384 (HDLNEWIGVDETLR) the chain is on the cytoplasmic side. A helical membrane pass occupies residues 385 to 405 (VFNLHGIGGIVGSIVLGVVAH). Residues 406–432 (PDVAASDGATVIDGGWAVHHWKQMGYQ) are Extracellular-facing. Residues 433–453 (FAGFTSVAAWSFVITAIICLL) traverse the membrane as a helical segment. Topologically, residues 454 to 517 (VDLVPGLHIR…NIKQEKQDEF (64 aa)) are cytoplasmic.

Belongs to the ammonia transporter channel (TC 1.A.11.2) family.

Its subcellular location is the membrane. Functionally, transporter for ammonium to use as a nitrogen source. The chain is Ammonium transporter 3 (amt3) from Schizosaccharomyces pombe (strain 972 / ATCC 24843) (Fission yeast).